Consider the following 156-residue polypeptide: N-glycosidase Npun_R5314 (156 aa).

This sequence belongs to the YbiA family.

It carries out the reaction 2,5-diamino-6-hydroxy-4-(5-phosphoribosylamino)-pyrimidine + H2O = 2,5,6-triamino-4-hydroxypyrimidine + D-ribose 5-phosphate. The catalysed reaction is 5-amino-6-(5-phospho-D-ribosylamino)uracil + H2O = 5,6-diaminouracil + D-ribose 5-phosphate. Its function is as follows. Catalyzes the hydrolysis of the N-glycosidic bond in the first two intermediates of riboflavin biosynthesis, which are highly reactive metabolites, yielding relatively innocuous products. Thus, can divert a surplus of harmful intermediates into relatively harmless products and pre-empt the damage these intermediates would otherwise do. May act on other substrates in vivo. Has no activity against GTP, nucleoside monophosphates or ADP-ribose. This Nostoc punctiforme (strain ATCC 29133 / PCC 73102) protein is N-glycosidase Npun_R5314.